Here is a 430-residue protein sequence, read N- to C-terminus: Leucoanthocyanidin dioxygenase (430 aa).

One can recognise a Fe2OG dioxygenase domain in the interval 212-311; the sequence is LLLQMKINYY…RFSWAIFCEP (100 aa). Residues His-236, Asp-238, and His-292 each coordinate Fe cation. Composition is skewed to basic and acidic residues over residues 376 to 407 and 415 to 430; these read KKDN…KEDG and KVFK…EESK. Positions 376 to 430 are disordered; it reads KKDNQDAVAENKDIKEDEQCGPAEHKDIKEDGQGAAAENKVFKENNQDVAAEESK.

Belongs to the iron/ascorbate-dependent oxidoreductase family. The cofactor is Fe cation. L-ascorbate serves as cofactor. In terms of tissue distribution, predominantly expressed in corollas and at lower levels in anthers.

It catalyses the reaction a (2R,3S,4S)-leucoanthocyanidin + 2-oxoglutarate + O2 = a 4-H-anthocyanidin with a 3-hydroxy group + succinate + CO2 + 2 H2O. It functions in the pathway pigment biosynthesis; anthocyanin biosynthesis. Oxidation of leucoanthocyanidins into anthocyanidins. This chain is Leucoanthocyanidin dioxygenase (ANT17), found in Petunia hybrida (Petunia).